A 60-amino-acid chain; its full sequence is Large ribosomal subunit protein uL30 (60 aa).

It belongs to the universal ribosomal protein uL30 family. In terms of assembly, part of the 50S ribosomal subunit.

The polypeptide is Large ribosomal subunit protein uL30 (Polaromonas naphthalenivorans (strain CJ2)).